The chain runs to 380 residues: Glucose-1-phosphate adenylyltransferase (380 aa).

Alpha-D-glucose 1-phosphate contacts are provided by residues Gly164, 179–180 (EK), and Ser190.

Belongs to the bacterial/plant glucose-1-phosphate adenylyltransferase family. In terms of assembly, homotetramer.

The enzyme catalyses alpha-D-glucose 1-phosphate + ATP + H(+) = ADP-alpha-D-glucose + diphosphate. The protein operates within glycan biosynthesis; glycogen biosynthesis. Its function is as follows. Involved in the biosynthesis of ADP-glucose, a building block required for the elongation reactions to produce glycogen. Catalyzes the reaction between ATP and alpha-D-glucose 1-phosphate (G1P) to produce pyrophosphate and ADP-Glc. This chain is Glucose-1-phosphate adenylyltransferase, found in Streptococcus sanguinis (strain SK36).